The sequence spans 28 residues: APDFSTLELIPDKLKEFGNTLEEKARMA.

The protein belongs to the apolipoprotein C1 family.

The protein resides in the secreted. Inhibitor of lipoprotein binding to the low density lipoprotein (LDL) receptor, LDL receptor-related protein, and very low density lipoprotein (VLDL) receptor. Associates with high density lipoproteins (HDL) and the triacylglycerol-rich lipoproteins in the plasma and makes up about 10% of the protein of the VLDL and 2% of that of HDL. Appears to interfere directly with fatty acid uptake and is also the major plasma inhibitor of cholesteryl ester transfer protein (CETP). Binds free fatty acids and reduces their intracellular esterification. Modulates the interaction of APOE with beta-migrating VLDL and inhibits binding of beta-VLDL to the LDL receptor-related protein. The protein is Apolipoprotein C-I (APOC1) of Oryctolagus cuniculus (Rabbit).